A 119-amino-acid polypeptide reads, in one-letter code: Protein MRP-126 (119 aa).

EF-hand domains are found at residues 23-58 (DVFHQYSRREGDKDTLTRKELKLLIEKQLANYLKHV) and 59-94 (KNQVSIDQIFKDLDNNKDQQLSFGEVMLLIIRVTVA). Ca(2+) is bound by residues Thr37, Glu42, Asp72, Asn74, Asp76, Gln78, and Glu83.

Belongs to the S-100 family. Expressed in v-myb-transformed myelomonocytic cells.

The sequence is that of Protein MRP-126 from Gallus gallus (Chicken).